Consider the following 146-residue polypeptide: Acidic phospholipase A2 S13-69J (146 aa).

Positions 1-19 are cleaved as a signal peptide; it reads MYPAHLLVLLAVCVSLLGA. The propeptide occupies 20–27; it reads ASIPPQPL. Disulfide bonds link cysteine 38/cysteine 98, cysteine 54/cysteine 145, cysteine 56/cysteine 72, cysteine 71/cysteine 126, cysteine 78/cysteine 119, cysteine 87/cysteine 112, and cysteine 105/cysteine 117. Ca(2+) contacts are provided by tyrosine 55, glycine 57, and glycine 59. Histidine 75 is an active-site residue. Aspartate 76 is a binding site for Ca(2+). The active site involves aspartate 120.

The protein belongs to the phospholipase A2 family. Group I subfamily. D49 sub-subfamily. The cofactor is Ca(2+). In terms of tissue distribution, expressed by the venom gland.

The protein localises to the secreted. It carries out the reaction a 1,2-diacyl-sn-glycero-3-phosphocholine + H2O = a 1-acyl-sn-glycero-3-phosphocholine + a fatty acid + H(+). Snake venom phospholipase A2 (PLA2) that inhibits collagen-induced platelet aggregation. PLA2 catalyzes the calcium-dependent hydrolysis of the 2-acyl groups in 3-sn-phosphoglycerides. This Austrelaps superbus (Lowland copperhead snake) protein is Acidic phospholipase A2 S13-69J.